The following is a 1188-amino-acid chain: Carboxylic acid reductase (1188 aa).

Residues H315, S408, 429–430, T434, D507, 519–522, K528, and K629 contribute to the AMP site; these read DG and YVDR. The region spanning 665-743 is the Carrier domain; that stretch reads AGERPVIETV…SVAAHIEKER (79 aa). S702 is subject to O-(pantetheine 4'-phosphoryl)serine. Residues 801 to 804, R828, R838, 868 to 869, 894 to 896, S934, Y970, K974, and S997 each bind NADP(+); these read NGWL, DF, and SGA.

Belongs to the ATP-dependent AMP-binding enzyme family. Carboxylic acid reductase subfamily. Pantetheine 4'-phosphate serves as cofactor.

The enzyme catalyses a carboxylate + ATP + NADPH + H(+) = an aldehyde + AMP + diphosphate + NADP(+). Functionally, catalyzes the ATP- and NADPH-dependent reduction of carboxylic acids to the corresponding aldehydes. Catalyzes the reduction of a very wide range of carboxylic acids, including benzoic acids, heterocyclic, phenylacetic, phenylpropanoic and fatty acid substrates. This is Carboxylic acid reductase from Segniliparus rugosus (strain ATCC BAA-974 / DSM 45345 / CCUG 50838 / CIP 108380 / JCM 13579 / CDC 945).